Reading from the N-terminus, the 514-residue chain is RNA polymerase sigma factor SigA (514 aa).

Over residues 135–159 (AAKKATAKKAAAKKTTAKKTAAKKS) the composition is skewed to basic residues. The interval 135–205 (AAKKATAKKA…SDDDEDDAPA (71 aa)) is disordered. Residues 281–351 (LLEANLRLVV…TRAMADQART (71 aa)) are sigma-70 factor domain-2. Positions 305–308 (DLIQ) match the Interaction with polymerase core subunit RpoC motif. Positions 360–436 (EVINKLARVQ…DSEAVVPADA (77 aa)) are sigma-70 factor domain-3. The tract at residues 449–502 (VLDTLSEREAGVVSMRFGLTDGQPKTLDEIGKVYGVTRERIRQIESKTMSKLRH) is sigma-70 factor domain-4. The H-T-H motif DNA-binding region spans 475–494 (LDEIGKVYGVTRERIRQIES).

The protein belongs to the sigma-70 factor family. RpoD/SigA subfamily. In terms of assembly, interacts transiently with the RNA polymerase catalytic core.

The protein localises to the cytoplasm. In terms of biological role, sigma factors are initiation factors that promote the attachment of RNA polymerase to specific initiation sites and are then released. This sigma factor is the primary sigma factor during exponential growth. The protein is RNA polymerase sigma factor SigA of Streptomyces griseus.